Consider the following 342-residue polypeptide: Growth hormone-regulated TBC protein 1 (342 aa).

One can recognise a Rab-GAP TBC domain in the interval 72–263; it reads GIPNEHRSHV…RIWDCLFFEG (192 aa).

Functionally, may act as a GTPase-activating protein for Rab family protein(s). This Xenopus laevis (African clawed frog) protein is Growth hormone-regulated TBC protein 1 (grtp1).